A 463-amino-acid polypeptide reads, in one-letter code: Fibrinogen beta chain (463 aa).

Residues 1-12 are compositionally biased toward acidic residues; it reads ASVEYDNEEDSP. The disordered stretch occupies residues 1-56; it reads ASVEYDNEEDSPQIDARAHRPLDKRQEAAPTLRPVAPPISGTGYQPRPPKQDKQAM. The residue at position 5 (Tyr5) is a Sulfotyrosine. Positions 16-27 are enriched in basic and acidic residues; the sequence is ARAHRPLDKRQE. Intrachain disulfides connect Cys205–Cys289 and Cys215–Cys244. Residues 206 to 461 enclose the Fibrinogen C-terminal domain; sequence NIPVVSGREC…KMSMKIKPYF (256 aa). An N-linked (GlcNAc...) asparagine glycan is attached at Asn367. Ca(2+) is bound by residues Asp384, Asp386, and Trp388. A disulfide bridge links Cys397 with Cys410.

As to quaternary structure, heterohexamer; disulfide linked. Contains 2 sets of 3 non-identical chains (alpha, beta and gamma). The 2 heterotrimers are in head to head conformation with the N-termini in a small central domain. In terms of processing, conversion of fibrinogen to fibrin is triggered by thrombin, which cleaves fibrinopeptides A and B from alpha and beta chains, and thus exposes the N-terminal polymerization sites responsible for the formation of the soft clot. The soft clot is converted into the hard clot by factor XIIIA which catalyzes the epsilon-(gamma-glutamyl)lysine cross-linking between gamma chains (stronger) and between alpha chains (weaker) of different monomers.

The protein resides in the secreted. Its function is as follows. Cleaved by the protease thrombin to yield monomers which, together with fibrinogen alpha (FGA) and fibrinogen gamma (FGG), polymerize to form an insoluble fibrin matrix. Fibrin has a major function in hemostasis as one of the primary components of blood clots. In Gallus gallus (Chicken), this protein is Fibrinogen beta chain (FGB).